The following is a 159-amino-acid chain: 6,7-dimethyl-8-ribityllumazine synthase (159 aa).

Residues Trp-26, 57–59 (ALE), and 79–81 (CVI) each bind 5-amino-6-(D-ribitylamino)uracil. 84-85 (GT) contacts (2S)-2-hydroxy-3-oxobutyl phosphate. His-87 (proton donor) is an active-site residue. 5-amino-6-(D-ribitylamino)uracil is bound at residue Asn-112. Residue Arg-126 coordinates (2S)-2-hydroxy-3-oxobutyl phosphate.

Belongs to the DMRL synthase family.

The enzyme catalyses (2S)-2-hydroxy-3-oxobutyl phosphate + 5-amino-6-(D-ribitylamino)uracil = 6,7-dimethyl-8-(1-D-ribityl)lumazine + phosphate + 2 H2O + H(+). Its pathway is cofactor biosynthesis; riboflavin biosynthesis; riboflavin from 2-hydroxy-3-oxobutyl phosphate and 5-amino-6-(D-ribitylamino)uracil: step 1/2. Its function is as follows. Catalyzes the formation of 6,7-dimethyl-8-ribityllumazine by condensation of 5-amino-6-(D-ribitylamino)uracil with 3,4-dihydroxy-2-butanone 4-phosphate. This is the penultimate step in the biosynthesis of riboflavin. This Corynebacterium efficiens (strain DSM 44549 / YS-314 / AJ 12310 / JCM 11189 / NBRC 100395) protein is 6,7-dimethyl-8-ribityllumazine synthase.